Consider the following 527-residue polypeptide: Laccase-5 (527 aa).

An N-terminal signal peptide occupies residues 1–23 (MGKYHSFVNVVALSLSLSGRVFG). Residues 25–150 (IGPVTDLTIS…DGLRGPLVVY (126 aa)) form the Plastocyanin-like 1 domain. Residues N74 and N77 are each glycosylated (N-linked (GlcNAc...) asparagine). Positions 87, 89, 132, and 134 each coordinate Cu cation. Cystine bridges form between C108–C516 and C140–C230. N156, N209, N233, N242, N276, N317, N358, N366, N393, and N402 each carry an N-linked (GlcNAc...) asparagine glycan. Positions 162 to 306 (VDDDTTVITL…GGVNSAILRY (145 aa)) constitute a Plastocyanin-like 2 domain. Residues 373-498 (TVPVLLQILS…AGFAIVWGED (126 aa)) enclose the Plastocyanin-like 3 domain. 7 residues coordinate Cu cation: H425, H428, H430, H480, C481, H482, and H486.

Belongs to the multicopper oxidase family. As to quaternary structure, homodimer. It depends on Cu cation as a cofactor.

The protein localises to the secreted. The catalysed reaction is 4 hydroquinone + O2 = 4 benzosemiquinone + 2 H2O. Functionally, lignin degradation and detoxification of lignin-derived products. This is Laccase-5 (LCC5) from Trametes villosa (White-rot fungus).